Here is a 390-residue protein sequence, read N- to C-terminus: Pyruvate dehydrogenase E1 component subunit alpha, somatic form, mitochondrial (390 aa).

The N-terminal 29 residues, 1-29 (MRKMLAAVSRVLSGVAQKPASRVLVASRH), are a transit peptide targeting the mitochondrion. An N6-acetyllysine; alternate modification is found at Lys63. Position 63 is an N6-succinyllysine; alternate (Lys63). Residues His92, Tyr118, Arg119, Ala157, Gly165, Val167, Asp196, Gly197, Ala198, Asn225, and Tyr227 each coordinate pyruvate. The thiamine diphosphate site is built by Tyr118 and Arg119. Positions 165, 167, 196, 197, 198, and 225 each coordinate thiamine diphosphate. Asp196 is a Mg(2+) binding site. Residues Asn225 and Tyr227 each contribute to the Mg(2+) site. Phosphoserine; by PDK1 is present on Ser232. Lys244 is modified (N6-acetyllysine; alternate). Lys244 is modified (N6-succinyllysine; alternate). Residue Lys267 is modified to N6-acetyllysine. Lys277 is subject to N6-succinyllysine. His292 contributes to the thiamine diphosphate binding site. The residue at position 293 (Ser293) is a Phosphoserine; by PDK1, PDK2, PDK3 and PDK4. Residue Ser295 is modified to Phosphoserine. Ser300 carries the post-translational modification Phosphoserine; by PDK1, PDK2, PDK3 and PDK4. Tyr301 is modified (phosphotyrosine). N6-acetyllysine; alternate is present on Lys313. An N6-succinyllysine; alternate modification is found at Lys313. N6-acetyllysine occurs at positions 321 and 336. Lys385 is subject to N6-succinyllysine.

Heterotetramer of two PDHA1 and two PDHB subunits. The heterotetramer interacts with DLAT, and is part of the multimeric pyruvate dehydrogenase complex that contains multiple copies of pyruvate dehydrogenase (E1), dihydrolipoamide acetyltransferase (DLAT, E2) and lipoamide dehydrogenase (DLD, E3). These subunits are bound to an inner core composed of about 48 DLAT and 12 PDHX molecules. Thiamine diphosphate is required as a cofactor. Requires Mg(2+) as cofactor. Phosphorylation at Ser-232, Ser-293 and Ser-300 by PDK family kinases inactivates the enzyme; for this phosphorylation at a single site is sufficient. Phosphorylation at Ser-293 interferes with access to active site, and thereby inactivates the enzyme. Dephosphorylation at all three sites, i.e. at Ser-232, Ser-293 and Ser-300, is required for reactivation. Post-translationally, acetylation alters the phosphorylation pattern. Deacetylated by SIRT3.

Its subcellular location is the mitochondrion matrix. The enzyme catalyses N(6)-[(R)-lipoyl]-L-lysyl-[protein] + pyruvate + H(+) = N(6)-[(R)-S(8)-acetyldihydrolipoyl]-L-lysyl-[protein] + CO2. Pyruvate dehydrogenase activity is inhibited by phosphorylation of PDHA1; it is reactivated by dephosphorylation. Its function is as follows. The pyruvate dehydrogenase complex catalyzes the overall conversion of pyruvate to acetyl-CoA and CO(2), and thereby links the glycolytic pathway to the tricarboxylic cycle. The chain is Pyruvate dehydrogenase E1 component subunit alpha, somatic form, mitochondrial (PDHA1) from Bos taurus (Bovine).